The sequence spans 399 residues: Nicotinate phosphoribosyltransferase 1 (399 aa).

Phosphohistidine; by autocatalysis is present on histidine 224.

This sequence belongs to the NAPRTase family. Post-translationally, transiently phosphorylated on a His residue during the reaction cycle. Phosphorylation strongly increases the affinity for substrates and increases the rate of nicotinate D-ribonucleotide production. Dephosphorylation regenerates the low-affinity form of the enzyme, leading to product release.

It carries out the reaction nicotinate + 5-phospho-alpha-D-ribose 1-diphosphate + ATP + H2O = nicotinate beta-D-ribonucleotide + ADP + phosphate + diphosphate. It participates in cofactor biosynthesis; NAD(+) biosynthesis; nicotinate D-ribonucleotide from nicotinate: step 1/1. Functionally, catalyzes the synthesis of beta-nicotinate D-ribonucleotide from nicotinate and 5-phospho-D-ribose 1-phosphate at the expense of ATP. The sequence is that of Nicotinate phosphoribosyltransferase 1 from Pseudomonas aeruginosa (strain ATCC 15692 / DSM 22644 / CIP 104116 / JCM 14847 / LMG 12228 / 1C / PRS 101 / PAO1).